A 431-amino-acid polypeptide reads, in one-letter code: MRALLARLLLCVLVVSDSKGSNELHQVPSNCDCLNGGTCVSNKYFSNIHWCNCPKKFGGQHCEIDKSKTCYEGNGHFYRGKASTDTMGRPCLPWNSATVLQQTYHAHRSDALQLGLGKHNYCRNPDNRRRPWCYVQVGLKLLVQECMVHDCADGKKPSSPPEELKFQCGQKTLRPRFKIIGGEFTTIENQPWFAAIYRRHRGGSVTYVCGGSLISPCWVISATHCFIDYPKKEDYIVYLGRSRLNSNTQGEMKFEVENLILHKDYSADTLAHHNDIALLKIRSKEGRCAQPSRTIQTICLPSMYNDPQFGTSCEITGFGKENSTDYLYPEQLKMTVVKLISHRECQQPHYYGSEVTTKMLCAADPQWKTDSCQGDSGGPLVCSLQGRMTLTGIVSWGRGCALKDKPGVYTRVSHFLPWIRSHTKEENGLAL.

The signal sequence occupies residues 1-20; that stretch reads MRALLARLLLCVLVVSDSKG. The EGF-like domain maps to 27 to 63; it reads VPSNCDCLNGGTCVSNKYFSNIHWCNCPKKFGGQHCE. 6 cysteine pairs are disulfide-bonded: cysteine 31/cysteine 39, cysteine 33/cysteine 51, cysteine 53/cysteine 62, cysteine 70/cysteine 151, cysteine 91/cysteine 133, and cysteine 122/cysteine 146. The binds urokinase plasminogen activator surface receptor stretch occupies residues 34–57; sequence LNGGTCVSNKYFSNIHWCNCPKKF. Threonine 38 carries an O-linked (Fuc) threonine glycan. The 82-residue stretch at 70–151 folds into the Kringle domain; it reads CYEGNGHFYR…LVQECMVHDC (82 aa). The segment at 152-177 is connecting peptide; the sequence is ADGKKPSSPPEELKFQCGQKTLRPRF. A Phosphoserine modification is found at serine 158. 6 cysteine pairs are disulfide-bonded: cysteine 168-cysteine 299, cysteine 209-cysteine 225, cysteine 217-cysteine 288, cysteine 313-cysteine 382, cysteine 345-cysteine 361, and cysteine 372-cysteine 400. The Peptidase S1 domain maps to 179 to 424; it reads IIGGEFTTIE…FLPWIRSHTK (246 aa). Catalysis depends on charge relay system residues histidine 224 and aspartate 275. Asparagine 322 is a glycosylation site (N-linked (GlcNAc...) asparagine). Serine 323 bears the Phosphoserine mark. Serine 376 (charge relay system) is an active-site residue.

This sequence belongs to the peptidase S1 family. Found in high and low molecular mass forms. Each consists of two chains, A and B. The high molecular mass form contains a long chain A which is cleaved to yield a short chain A. Forms heterodimer with SERPINA5. Binds LRP1B; binding is followed by internalization and degradation. Interacts with MRC2. Interacts with PLAUR. In complex with SERPINE1, interacts with PLAUR/uPAR. Interacts with SORL1 and LRP1, either alone or in complex with SERPINE1; these interactions are abolished in the presence of LRPAP1/RAP. The ternary complex composed of PLAUR-PLAU-PAI1 also interacts with SORLA. In terms of processing, phosphorylation of Ser-158 and Ser-323 abolishes proadhesive ability but does not interfere with receptor binding. Produced as an inactive single-chain protein (pro-uPA or sc-uPA), is processed into the active disulfide-linked two-chain form of PLAU/uPA by a proteolytic event mediated, at least, by TMPRSS4. As to expression, expressed in the prostate gland and prostate cancers.

It localises to the secreted. It carries out the reaction Specific cleavage of Arg-|-Val bond in plasminogen to form plasmin.. Inhibited by SERPINA5. Inhibited by SERPINE1. In terms of biological role, specifically cleaves the zymogen plasminogen to form the active enzyme plasmin. This Homo sapiens (Human) protein is Urokinase-type plasminogen activator.